A 569-amino-acid polypeptide reads, in one-letter code: Urease subunit beta (569 aa).

The Urease domain maps to Gly131–Phe569. Ni(2+)-binding residues include His136, His138, and Lys219. Lys219 carries the post-translational modification N6-carboxylysine. His221 is a substrate binding site. Ni(2+) contacts are provided by His248 and His274. His322 (proton donor) is an active-site residue. Ni(2+) is bound at residue Asp362.

This sequence belongs to the metallo-dependent hydrolases superfamily. Urease alpha subunit family. In terms of assembly, heterohexamer of 3 UreA (alpha) and 3 UreB (beta) subunits. The cofactor is Ni cation. Post-translationally, carboxylation allows a single lysine to coordinate two nickel ions.

The protein localises to the cytoplasm. It catalyses the reaction urea + 2 H2O + H(+) = hydrogencarbonate + 2 NH4(+). It participates in nitrogen metabolism; urea degradation; CO(2) and NH(3) from urea (urease route): step 1/1. This is Urease subunit beta from Helicobacter pylori (strain HPAG1).